We begin with the raw amino-acid sequence, 372 residues long: MRSKVTGAKRWVVKIGSALLTADGKGLDRGAMAVWVEQMVALREAGVELVLVSSGAVAAGMSQLGWTARPSAMNELQAAASIGQMRLVQAWESSFGEHGKHTAQILLTHDDLSDRKRYLNARSTLRTLVDLGVVPVINENDTVVTDEIRFGDNDTLAALVANLVEADLLVILTDRDGMFDADPRNNPEAQLIYEARADDPSLDAVAGGTGGALGRGGMQTKLRAARLAARSGAHTIIIGGRIERVLDRLKAGERLGTLLSPERGMLAARKQWLAGHLQTRGTLVLDAGAVQALRQANKSLLPVGVKTVQGSFRRGEMVVCVGPDGLEVARGLANYSALEAQKIIGQSSDAIESLLGYSAEPELVHRDNLVLV.

K14 is a binding site for ATP. S54, D141, and N153 together coordinate substrate. 173–174 is a binding site for ATP; sequence TD. Residues 280 to 358 form the PUA domain; the sequence is RGTLVLDAGA…DAIESLLGYS (79 aa).

The protein belongs to the glutamate 5-kinase family.

Its subcellular location is the cytoplasm. It catalyses the reaction L-glutamate + ATP = L-glutamyl 5-phosphate + ADP. It participates in amino-acid biosynthesis; L-proline biosynthesis; L-glutamate 5-semialdehyde from L-glutamate: step 1/2. Catalyzes the transfer of a phosphate group to glutamate to form L-glutamate 5-phosphate. This Pseudomonas putida (strain W619) protein is Glutamate 5-kinase.